The following is an 814-amino-acid chain: Protein ADP-ribosyltransferase PARP3 (814 aa).

Basic and acidic residues-rich tracts occupy residues 1-19 (MKVHETRSHAHMSGDEQKG) and 27-48 (EGKLPESEQSQKKAKPENDDGR). A disordered region spans residues 1–52 (MKVHETRSHAHMSGDEQKGNLRKHKAEGKLPESEQSQKKAKPENDDGRSVNG). The PADR1 zinc-binding domain occupies 38 to 186 (KKAKPENDDG…KRELGSADKP (149 aa)). The segment at 105–150 (GALAKCPLCGGTLICDNEKRFVCGGEISEWCSCVFSTKDPPRKEEP) is zinc ribbon. Cys-110, Cys-113, Cys-127, and Cys-137 together coordinate Zn(2+). TPR repeat units follow at residues 182–215 (SADKPFVGMMISLMGRLTRTHQYWKKKIERNGGK) and 277–310 (DLSVEGKGIPWDKQDPSEEAIESFSAELKMYGKR). Positions 187–274 (FVGMMISLMG…EAQPLEAYDV (88 aa)) constitute a BRCT domain. The WGR domain occupies 322–422 (GGKIFEKDGL…KKIQKKPHKF (101 aa)). A PARP alpha-helical domain is found at 449–568 (HCKLDSFVAN…DINTASRLIG (120 aa)). In terms of domain architecture, PARP catalytic spans 577–808 (DPLSDRYKKL…VKYEEKGTEI (232 aa)).

Belongs to the ARTD/PARP family.

Its subcellular location is the nucleus. It carries out the reaction L-aspartyl-[protein] + NAD(+) = 4-O-(ADP-D-ribosyl)-L-aspartyl-[protein] + nicotinamide. The catalysed reaction is L-glutamyl-[protein] + NAD(+) = 5-O-(ADP-D-ribosyl)-L-glutamyl-[protein] + nicotinamide. Its function is as follows. Involved in the base excision repair (BER) pathway, by catalyzing the poly(ADP-ribosyl)ation of a limited number of acceptor proteins involved in chromatin architecture and in DNA metabolism. This modification follows DNA damages and appears as an obligatory step in a detection/signaling pathway leading to the reparation of DNA strand breaks. This chain is Protein ADP-ribosyltransferase PARP3 (PARP3), found in Arabidopsis thaliana (Mouse-ear cress).